The following is a 358-amino-acid chain: Peptide chain release factor 1 (358 aa).

Residue Q234 is modified to N5-methylglutamine.

The protein belongs to the prokaryotic/mitochondrial release factor family. In terms of processing, methylated by PrmC. Methylation increases the termination efficiency of RF1.

Its subcellular location is the cytoplasm. In terms of biological role, peptide chain release factor 1 directs the termination of translation in response to the peptide chain termination codons UAG and UAA. The chain is Peptide chain release factor 1 from Leifsonia xyli subsp. xyli (strain CTCB07).